The chain runs to 650 residues: MASNMDREMILADFQACTGIENIDEAITLLEQNNWDLVAAINGVIPQENGILQSEYGGETIPGPAFNPASHPASAPTSSSSSAFRPVMPSRQIVERQPRMLDFRVEYRDRNVDVVLEDTCTVGEIKQILENELQIPVSKMLLKGWKTGDVEDSTVLKSLHLPKNNSLYVLTPDLPPPSSSSHAGALQESLNQNFMLIITHREVQREYNLNFSGSSTIQEVKRNVYDLTSIPVRHQLWEGWPTSATDDSMCLAESGLSYPCHRLTVGRRSSPAQTREQSEEQITDVHMVSDSDGDDFEDATEFGVDDGEVFGMASSALRKSPMMPENAENEGDALLQFTAEFSSRYGDCHPVFFIGSLEAAFQEAFYVKARDRKLLAIYLHHDESVLTNVFCSQMLCAESIVSYLSQNFITWAWDLTKDSNRARFLTMCNRHFGSVVAQTIRTQKTDQFPLFLIIMGKRSSNEVLNVIQGNTTVDELMMRLMAAMEIFTAQQQEDIKDEDEREARENVKREQDEAYRLSLEADRAKREAHEREMAEQFRLEQIRKEQEEEREAIRLSLEQALPPEPKEENAEPVSKLRIRTPSGEFLERRFLASNKLQIVFDFVASKGFPWDEYKLLSTFPRRDVTQLDPNKSLLEVKLFPQETLFLEAKE.

Positions 1–57 constitute a UBA domain; it reads MASNMDREMILADFQACTGIENIDEAITLLEQNNWDLVAAINGVIPQENGILQSEYG. The interval 62-87 is disordered; sequence PGPAFNPASHPASAPTSSSSSAFRPV. Residues 68–83 are compositionally biased toward low complexity; sequence PASHPASAPTSSSSSA. Position 320 is a phosphoserine (Ser-320). A UBX domain is found at 569–646; that stretch reads NAEPVSKLRI…KLFPQETLFL (78 aa). Thr-580 is modified (phosphothreonine). The residue at position 582 (Ser-582) is a Phosphoserine.

As to quaternary structure, interacts with CDT1 and ATPase VCP/p97. Interacts (via UBA domain) with FAS (via death domain). Interacts (via UBA domain) with NLRP12 (via DAPIN/PYRIN domain). As to expression, most abundant in testis, slightly less abundant in skeletal muscle and heart, followed by prostate, thymus, ovary, small intestine, and colon. Not detected in the peripheral blood leukocytes.

It localises to the nucleus. Ubiquitin-binding protein. Required for the progression of DNA replication forks by targeting DNA replication licensing factor CDT1 for degradation. Potentiates but cannot initiate FAS-induced apoptosis. The protein is FAS-associated factor 1 (FAF1) of Homo sapiens (Human).